The chain runs to 517 residues: Putative thymidine phosphorylase (517 aa).

It belongs to the thymidine/pyrimidine-nucleoside phosphorylase family. Type 2 subfamily.

The enzyme catalyses thymidine + phosphate = 2-deoxy-alpha-D-ribose 1-phosphate + thymine. The protein is Putative thymidine phosphorylase of Legionella pneumophila subsp. pneumophila (strain Philadelphia 1 / ATCC 33152 / DSM 7513).